A 535-amino-acid polypeptide reads, in one-letter code: CTP synthase (535 aa).

The segment at 1–267 is amidoligase domain; the sequence is MTKYIFVTGG…DQIVCDHLKL (267 aa). Ser13 is a binding site for CTP. Ser13 contributes to the UTP binding site. Residue 14–19 coordinates ATP; sequence SLGKGI. Tyr54 provides a ligand contact to L-glutamine. Asp71 provides a ligand contact to ATP. Positions 71 and 141 each coordinate Mg(2+). Residues 148 to 150, 188 to 193, and Lys224 contribute to the CTP site; these read DIE and KTKPTQ. UTP contacts are provided by residues 188-193 and Lys224; that span reads KTKPTQ. Residue 240–242 participates in ATP binding; sequence RDA. Positions 292 to 534 constitute a Glutamine amidotransferase type-1 domain; that stretch reads KIALVGKYVE…VRASITNKES (243 aa). Gly354 contacts L-glutamine. Cys381 acts as the Nucleophile; for glutamine hydrolysis in catalysis. L-glutamine contacts are provided by residues 382-385, Glu405, and Arg462; that span reads LGMQ. Active-site residues include His507 and Glu509.

This sequence belongs to the CTP synthase family. In terms of assembly, homotetramer.

It carries out the reaction UTP + L-glutamine + ATP + H2O = CTP + L-glutamate + ADP + phosphate + 2 H(+). It catalyses the reaction L-glutamine + H2O = L-glutamate + NH4(+). The enzyme catalyses UTP + NH4(+) + ATP = CTP + ADP + phosphate + 2 H(+). The protein operates within pyrimidine metabolism; CTP biosynthesis via de novo pathway; CTP from UDP: step 2/2. With respect to regulation, allosterically activated by GTP, when glutamine is the substrate; GTP has no effect on the reaction when ammonia is the substrate. The allosteric effector GTP functions by stabilizing the protein conformation that binds the tetrahedral intermediate(s) formed during glutamine hydrolysis. Inhibited by the product CTP, via allosteric rather than competitive inhibition. Its function is as follows. Catalyzes the ATP-dependent amination of UTP to CTP with either L-glutamine or ammonia as the source of nitrogen. Regulates intracellular CTP levels through interactions with the four ribonucleotide triphosphates. This chain is CTP synthase, found in Bacillus cereus (strain ATCC 10987 / NRS 248).